The following is a 480-amino-acid chain: Cysteine--tRNA ligase (480 aa).

Residue C31 coordinates Zn(2+). The 'HIGH' region signature appears at 33–43 (PTVYDSSHIGH). Positions 211, 236, and 240 each coordinate Zn(2+). The 'KMSKS' region signature appears at 269 to 273 (KMSKS). K272 serves as a coordination point for ATP.

The protein belongs to the class-I aminoacyl-tRNA synthetase family. The cofactor is Zn(2+).

The catalysed reaction is tRNA(Cys) + L-cysteine + ATP = L-cysteinyl-tRNA(Cys) + AMP + diphosphate. This chain is Cysteine--tRNA ligase, found in Encephalitozoon cuniculi (strain GB-M1) (Microsporidian parasite).